We begin with the raw amino-acid sequence, 182 residues long: MSNQLSPKPPVNPIVMGKIGSAYGIRGWLRVFSSTEDADSIFDYQPWFIQSKSGWQLVEIEGWKYHNQDLIIKVKGADDRDAANLLTNCEIVVDSSQLPDLGVGDYYWKDLIGCQVVTVTGYELGKIIDMMETGSNDVMVIKANLKDAFGVKERLVPFLTEQVVKRVDLSAQTIEVDWDPGF.

One can recognise a PRC barrel domain in the interval 103–182 (VGDYYWKDLI…TIEVDWDPGF (80 aa)).

The protein belongs to the RimM family. In terms of assembly, binds ribosomal protein uS19.

It localises to the cytoplasm. Its function is as follows. An accessory protein needed during the final step in the assembly of 30S ribosomal subunit, possibly for assembly of the head region. Essential for efficient processing of 16S rRNA. May be needed both before and after RbfA during the maturation of 16S rRNA. It has affinity for free ribosomal 30S subunits but not for 70S ribosomes. The sequence is that of Ribosome maturation factor RimM from Pectobacterium atrosepticum (strain SCRI 1043 / ATCC BAA-672) (Erwinia carotovora subsp. atroseptica).